Consider the following 454-residue polypeptide: Bifunctional protein GlmU (454 aa).

The tract at residues 1-226 (MALNVVILAA…AIEVEGANNR (226 aa)) is pyrophosphorylase. Residues 8–11 (LAAG), Lys22, Gln73, 78–79 (GT), 100–102 (YGD), Gly137, Glu151, Asn166, and Asn224 each bind UDP-N-acetyl-alpha-D-glucosamine. Asp102 contacts Mg(2+). Asn224 lines the Mg(2+) pocket. Positions 227 to 247 (VQLAQLERAYQAREAEKLMIA) are linker. An N-acetyltransferase region spans residues 248 to 454 (GANLRDPSRI…GWQRPVKIKK (207 aa)). UDP-N-acetyl-alpha-D-glucosamine is bound by residues Arg330 and Lys348. His360 serves as the catalytic Proton acceptor. UDP-N-acetyl-alpha-D-glucosamine is bound by residues Tyr363 and Asn374. Residues Ala377, 383–384 (NY), Ser402, Ala420, and Arg437 each bind acetyl-CoA.

This sequence in the N-terminal section; belongs to the N-acetylglucosamine-1-phosphate uridyltransferase family. The protein in the C-terminal section; belongs to the transferase hexapeptide repeat family. In terms of assembly, homotrimer. Requires Mg(2+) as cofactor.

It is found in the cytoplasm. It catalyses the reaction alpha-D-glucosamine 1-phosphate + acetyl-CoA = N-acetyl-alpha-D-glucosamine 1-phosphate + CoA + H(+). The catalysed reaction is N-acetyl-alpha-D-glucosamine 1-phosphate + UTP + H(+) = UDP-N-acetyl-alpha-D-glucosamine + diphosphate. It functions in the pathway nucleotide-sugar biosynthesis; UDP-N-acetyl-alpha-D-glucosamine biosynthesis; N-acetyl-alpha-D-glucosamine 1-phosphate from alpha-D-glucosamine 6-phosphate (route II): step 2/2. The protein operates within nucleotide-sugar biosynthesis; UDP-N-acetyl-alpha-D-glucosamine biosynthesis; UDP-N-acetyl-alpha-D-glucosamine from N-acetyl-alpha-D-glucosamine 1-phosphate: step 1/1. It participates in bacterial outer membrane biogenesis; LPS lipid A biosynthesis. Its function is as follows. Catalyzes the last two sequential reactions in the de novo biosynthetic pathway for UDP-N-acetylglucosamine (UDP-GlcNAc). The C-terminal domain catalyzes the transfer of acetyl group from acetyl coenzyme A to glucosamine-1-phosphate (GlcN-1-P) to produce N-acetylglucosamine-1-phosphate (GlcNAc-1-P), which is converted into UDP-GlcNAc by the transfer of uridine 5-monophosphate (from uridine 5-triphosphate), a reaction catalyzed by the N-terminal domain. In Shewanella sp. (strain ANA-3), this protein is Bifunctional protein GlmU.